Consider the following 535-residue polypeptide: Heparanase (535 aa).

An N-terminal signal peptide occupies residues 1-27 (MLRLLLLWLWGPLGALAQGAPAGTAPT). Residues 54–56 (DAS) and Thr89 contribute to the heparan sulfate group site. Positions 102–149 (PTSEERSYWKSQVNHDICRSEPVSAAVLRKLQVEWPFQELLLLREQYQ) are cleaved as a propeptide — linker peptide. Cys119 and Cys171 are disulfide-bonded. 150 to 154 (KEFKN) is a heparan sulfate group binding site. N-linked (GlcNAc...) asparagine glycans are attached at residues Asn192 and Asn209. The active-site Proton donor is the Glu217. Residues 262-272 (QPRGKTVKLLR), His288, and Arg295 contribute to the heparan sulfate group site. The interval 280–409 (EVIDSLTWHH…LLFKKLVGPR (130 aa)) is required for heterodimerization with the heparanase 8 kDa subunit. Glu335 serves as the catalytic Nucleophile. Heparan sulfate group contacts are provided by residues 340 to 342 (YGG) and 381 to 383 (GNY). A disulfide bridge links Cys429 with Cys534. Residue Asn451 is glycosylated (N-linked (GlcNAc...) asparagine). A required for transferring proheparanase to the Golgi apparatus, secretion and subsequent enzyme activity and for enhancement of PKB/AKT1 phosphorylation region spans residues 519–535 (FSYGFFVIRNAKIAACI).

It belongs to the glycosyl hydrolase 79 family. Heterodimer; heterodimer formation between the 8 kDa and the 50 kDa subunits is required for enzyme activity. Interacts with TF; the interaction, inhibited by heparin, enhances the generation of activated factor X and activates coagulation. Interacts with HRG; the interaction is enhanced at acidic pH, partially inhibits binding of HPSE to cell surface receptors and modulates its enzymatic activity. Interacts with SDC1; the interaction enhances the shedding of SDC1. Interacts with HPSE2. In terms of processing, proteolytically processed. The cleavage of the 65 kDa form leads to the generation of a linker peptide, and the 8 kDa and 50 kDa products. The active form, the 8/50 kDa heterodimer, is resistant to degradation. Complete removal of the linker peptide appears to be a prerequisite to the complete activation of the enzyme. Post-translationally, N-glycosylated. Glycosylation of the 50 kDa subunit appears to be essential for its solubility. Expressed in skin, mainly in the stratum granulosum and the first layer of the stratum corneum in the upper part of the epidermis. Also detected in hair follicles and in sebaceous glands.

The protein resides in the lysosome membrane. The protein localises to the secreted. It localises to the nucleus. The enzyme catalyses endohydrolysis of (1-&gt;4)-beta-D-glycosidic bonds of heparan sulfate chains in heparan sulfate proteoglycan.. With respect to regulation, inhibited by EDTA and activated by calcium and magnesium. Inhibited by laminarin sulfate and, to a lower extent, by heparin and sulfamin. Functionally, endoglycosidase that cleaves heparan sulfate proteoglycans (HSPGs) into heparan sulfate side chains and core proteoglycans. Participates in extracellular matrix (ECM) degradation and remodeling. Selectively cleaves the linkage between a glucuronic acid unit and an N-sulfo glucosamine unit carrying either a 3-O-sulfo or a 6-O-sulfo group. Can also cleave the linkage between a glucuronic acid unit and an N-sulfo glucosamine unit carrying a 2-O-sulfo group, but not linkages between a glucuronic acid unit and a 2-O-sulfated iduronic acid moiety. It is essentially inactive at neutral pH but becomes active under acidic conditions such as during tumor invasion and in inflammatory processes. Facilitates cell migration associated with metastasis, wound healing and inflammation. Enhances shedding of syndecans, and increases endothelial invasion and angiogenesis in myelomas. Acts as a procoagulant by increasing the generation of activation factor X in the presence of tissue factor and activation factor VII. Increases cell adhesion to the extracellular matrix (ECM), independent of its enzymatic activity. Induces AKT1/PKB phosphorylation via lipid rafts increasing cell mobility and invasion. Heparin increases this AKT1/PKB activation. Regulates osteogenesis. Enhances angiogenesis through up-regulation of SRC-mediated activation of VEGF. Implicated in hair follicle inner root sheath differentiation and hair homeostasis. The chain is Heparanase (Hpse) from Mus musculus (Mouse).